The following is a 261-amino-acid chain: Spermatogenesis-associated protein 46 (261 aa).

Positions serine 140–histidine 159 are disordered.

In terms of tissue distribution, testis-specific.

Its subcellular location is the nucleus membrane. Plays a role in spermiogenesis and fertilization. The protein is Spermatogenesis-associated protein 46 of Homo sapiens (Human).